A 293-amino-acid polypeptide reads, in one-letter code: Protease HtpX (293 aa).

Helical transmembrane passes span 4–24 (IALFLLTNLAVMLVFGLVLSL) and 34–54 (GLMIMAGLFGFGGAFVSLLMS). His139 lines the Zn(2+) pocket. The active site involves Glu140. His143 contacts Zn(2+). The next 2 helical transmembrane spans lie at 158 to 178 (VVNTFVIFISRLIAQIAAGFL) and 193 to 213 (MVYFAVSMVLELVFGILASII). Glu222 contacts Zn(2+).

Belongs to the peptidase M48B family. Requires Zn(2+) as cofactor.

Its subcellular location is the cell inner membrane. The sequence is that of Protease HtpX from Yersinia pseudotuberculosis serotype O:1b (strain IP 31758).